Reading from the N-terminus, the 604-residue chain is 2-isopropylmalate synthase 2, mitochondrial (604 aa).

The N-terminal 50 residues, 1-50 (MVKHSFIALAEHASKLRRSIPPVKLTYKNMLRDPSVKYRAFAPPKMVKRI), are a transit peptide targeting the mitochondrion. The 276-residue stretch at 60–335 (PRWLSTDLRD…SPNLDFSDLT (276 aa)) folds into the Pyruvate carboxyltransferase domain. The a divalent metal cation site is built by Asp69, His274, His276, and Asn310.

Belongs to the alpha-IPM synthase/homocitrate synthase family. LeuA type 2 subfamily. As to quaternary structure, homodimer. It depends on a divalent metal cation as a cofactor.

The protein localises to the mitochondrion. The enzyme catalyses 3-methyl-2-oxobutanoate + acetyl-CoA + H2O = (2S)-2-isopropylmalate + CoA + H(+). It participates in amino-acid biosynthesis; L-leucine biosynthesis; L-leucine from 3-methyl-2-oxobutanoate: step 1/4. Catalyzes the condensation of the acetyl group of acetyl-CoA with 3-methyl-2-oxobutanoate (2-oxoisovalerate) to form 3-carboxy-3-hydroxy-4-methylpentanoate (2-isopropylmalate). Redundant to LEU4, responsible for about 20% of alpha-IPMS activity. Involved in leucine synthesis. The protein is 2-isopropylmalate synthase 2, mitochondrial of Saccharomyces cerevisiae (strain ATCC 204508 / S288c) (Baker's yeast).